The sequence spans 125 residues: Cu-Zn superoxide dismutase-like protein OPG175 (125 aa).

An intrachain disulfide couples cysteine 52 to cysteine 102.

This sequence belongs to the Cu-Zn superoxide dismutase family.

It localises to the virion. Its subcellular location is the host cytoplasm. Functionally, superoxide dismutase-like protein with no enzymatic activity. The protein is Cu-Zn superoxide dismutase-like protein OPG175 (OPG175) of Cowpox virus (strain Brighton Red) (CPV).